Consider the following 312-residue polypeptide: DNA-directed RNA polymerase subunit alpha (312 aa).

An alpha N-terminal domain (alpha-NTD) region spans residues 1–226 (MIEFEKPIIT…EHLNLFTDLT (226 aa)). Residues 243 to 312 (DEKVLDRTIE…DLGLGLKNDK (70 aa)) are alpha C-terminal domain (alpha-CTD).

It belongs to the RNA polymerase alpha chain family. As to quaternary structure, homodimer. The RNAP catalytic core consists of 2 alpha, 1 beta, 1 beta' and 1 omega subunit. When a sigma factor is associated with the core the holoenzyme is formed, which can initiate transcription.

It catalyses the reaction RNA(n) + a ribonucleoside 5'-triphosphate = RNA(n+1) + diphosphate. Its function is as follows. DNA-dependent RNA polymerase catalyzes the transcription of DNA into RNA using the four ribonucleoside triphosphates as substrates. This chain is DNA-directed RNA polymerase subunit alpha, found in Streptococcus agalactiae serotype III (strain NEM316).